The primary structure comprises 455 residues: Ribulose bisphosphate carboxylase large chain (455 aa).

N6,N6,N6-trimethyllysine is present on K5. Substrate is bound by residues N114 and T164. The Proton acceptor role is filled by K166. A substrate-binding site is contributed by K168. Mg(2+)-binding residues include K192, D194, and E195. K192 is subject to N6-carboxylysine. The active-site Proton acceptor is H285. 3 residues coordinate substrate: R286, H318, and S370.

The protein belongs to the RuBisCO large chain family. Type I subfamily. Heterohexadecamer of 8 large chains and 8 small chains; disulfide-linked. The disulfide link is formed within the large subunit homodimers. Requires Mg(2+) as cofactor. Post-translationally, the disulfide bond which can form in the large chain dimeric partners within the hexadecamer appears to be associated with oxidative stress and protein turnover.

The protein resides in the plastid. It localises to the chloroplast. The enzyme catalyses 2 (2R)-3-phosphoglycerate + 2 H(+) = D-ribulose 1,5-bisphosphate + CO2 + H2O. The catalysed reaction is D-ribulose 1,5-bisphosphate + O2 = 2-phosphoglycolate + (2R)-3-phosphoglycerate + 2 H(+). Its function is as follows. RuBisCO catalyzes two reactions: the carboxylation of D-ribulose 1,5-bisphosphate, the primary event in carbon dioxide fixation, as well as the oxidative fragmentation of the pentose substrate in the photorespiration process. Both reactions occur simultaneously and in competition at the same active site. This chain is Ribulose bisphosphate carboxylase large chain, found in Lupinus luteus (European yellow lupine).